The chain runs to 420 residues: PHO85 cyclin-6 (420 aa).

Disordered regions lie at residues 1–82 (MSIK…ESSF), 134–155 (QGTH…DTSN), and 268–321 (VTTT…GVQR). The segment covering 7–22 (SPSSTNASSSPKSTYS) has biased composition (low complexity). Ser-61 is modified (phosphoserine). The span at 134–143 (QGTHTVQSST) shows a compositional bias: polar residues. A compositionally biased stretch (basic and acidic residues) spans 277–296 (AKHESPSNESSLDKANRGAD). Residues Ser-281 and Ser-312 each carry the phosphoserine modification. Residues 307-316 (NENDDSDDEN) are compositionally biased toward acidic residues. Position 317 is a phosphothreonine (Thr-317).

This sequence belongs to the cyclin family. PHO80 subfamily. Forms a cyclin-CDK complex with PHO85. Interacts with the substrate protein YJL084C. Interacts with elongin-C, which stabilizes PCL6. Interacts with the CDK inhibitor (CKI) PHO81.

The protein localises to the cytoplasm. It localises to the nucleus. Its function is as follows. Cyclin partner of the cyclin-dependent kinase (CDK) PHO85. Together with cyclin PCL7, controls glycogen phosphorylase and glycogen synthase activities in response to nutrient availablility. The PCL6-PHO85 cyclin-CDK holoenzyme has GLC8 kinase activity and phosphorylates and inactivates the phosphatase PP1-2 inhibitor GLC8, causing activation of PP1-2, which then dephosphorylates and activates glycogen phosphorylase. PCL6-PHO85 also phosphorylates YJL084C. This is PHO85 cyclin-6 (PCL6) from Saccharomyces cerevisiae (strain ATCC 204508 / S288c) (Baker's yeast).